A 665-amino-acid polypeptide reads, in one-letter code: Ribonuclease R 2 (665 aa).

Residues 202 to 528 (REDYRNEITY…LIIHRLLHLY (327 aa)) enclose the RNB domain. The S1 motif domain occupies 579–662 (GEVYTGTITG…RKGTVDFEQI (84 aa)).

The protein belongs to the RNR ribonuclease family. RNase R subfamily.

Its subcellular location is the cytoplasm. It catalyses the reaction Exonucleolytic cleavage in the 3'- to 5'-direction to yield nucleoside 5'-phosphates.. Functionally, 3'-5' exoribonuclease that releases 5'-nucleoside monophosphates and is involved in maturation of structured RNAs. This chain is Ribonuclease R 2, found in Lactococcus lactis subsp. lactis (strain IL1403) (Streptococcus lactis).